The following is an 835-amino-acid chain: Protein VP3 (835 aa).

Residues 171–245 (RKIKERMTTS…KHTIKLKQEK (75 aa)) are N7-methyltransferase activity. Positions 246–428 (WLGKRVSQFD…INIKRFIPKG (183 aa)) are 2'-O-methyltransferase activity. The interval 429–555 (VFYAFINNIT…NHLFIINGTD (127 aa)) is N7-methyltransferase activity. Positions 556 to 692 (KYYKLDQYAN…EYINKVYSIT (137 aa)) are GTase/RTPase activity. Residues 693–835 (YADDPNYFIG…KGETVFDMSE (143 aa)) are 2'-5'-phosphodiesterase activity. Residues His-718, Thr-720, His-797, and Thr-799 each act as for 2'-5'-phosphodiesterase activity in the active site.

The protein belongs to the rotavirus VP3 family. In terms of assembly, interacts with VP1. Interacts with VP2.

Its subcellular location is the virion. The enzyme catalyses a 5'-end diphospho-ribonucleoside in mRNA + GTP + H(+) = a 5'-end (5'-triphosphoguanosine)-ribonucleoside in mRNA + diphosphate. It carries out the reaction a 5'-end (5'-triphosphoguanosine)-ribonucleoside in mRNA + S-adenosyl-L-methionine = a 5'-end (N(7)-methyl 5'-triphosphoguanosine)-ribonucleoside in mRNA + S-adenosyl-L-homocysteine. The catalysed reaction is 5'-triphosphoadenylyl-(2'-&gt;5')-adenylyl-(2'-&gt;5')-adenosine + 2 H2O = 2 AMP + ATP + 2 H(+). Its function is as follows. Multifunctional enzyme involved in mRNA capping. Catalyzes the formation of the 5' cap structure on the viral plus-strand transcripts. Specifically binds to GTP and displays guanylyltransferase and methyltransferase activities. Has affinity for ssRNA but not for dsRNA. Capping activity is non-specific and caps RNAs that initiate with either a G or an A residue. Together with VP1 polymerase, forms a VP1-VP3 complex positioned near the channels situated at each of the five-fold vertices of the core. Following infection, the outermost layer of the virus is lost, leaving a double-layered particle (DLP) made up of the core and VP6 shell. VP1 then catalyzes the transcription of fully conservative plus-strand genomic RNAs that are capped by VP3 and extruded through the DLP's channels into the cytoplasm where they function as mRNAs for translation of viral proteins. DLPs probably have an RNA triphosphatase activity as well, whereas open cores do not. Functionally, counteracts the host innate immune response thanks to its phosphodiesterase that degrades the 5'-triphosphorylated, 2'-5' linked adenylate oligomers produced by the host cell IFN-inducible 2',5'-oligoadenylate synthetase (OAS). The host RNaseL is therefore not activated. The sequence is that of Protein VP3 from Homo sapiens (Human).